Consider the following 1014-residue polypeptide: Pre-mRNA-processing ATP-dependent RNA helicase prp11 (1014 aa).

Positions 1-11 (MSRRTRSRSPP) are enriched in basic residues. The segment at 1–149 (MSRRTRSRSP…SRFDRTERVG (149 aa)) is disordered. Basic and acidic residues-rich tracts occupy residues 15–87 (YNRE…EYAR) and 106–121 (RHAE…KSDE). The Q motif signature appears at 418–446 (TSWSQCGLSAQTISVINSLGYEKPTSIQA). Residues 449-627 (IPAITSGRDV…RKVLKKPVEI (179 aa)) form the Helicase ATP-binding domain. 462–469 (AKTGSGKT) contributes to the ATP binding site. A DEAD box motif is present at residues 575–578 (DEAD). The 165-residue stretch at 638–802 (EVEQIVEVRP…PVPKELQTLA (165 aa)) folds into the Helicase C-terminal domain. Residues 815–875 (KAAGGGFGGK…PEKSTGDPTL (61 aa)) are disordered. 2 stretches are compositionally biased toward basic and acidic residues: residues 827-838 (SRLDETRNAERK) and 855-875 (AEAK…DPTL).

This sequence belongs to the DEAD box helicase family. DDX46/PRP5 subfamily.

It localises to the nucleus. It carries out the reaction ATP + H2O = ADP + phosphate + H(+). Functionally, ATP-dependent RNA helicase involved in pre-spliceosome/complex A assembly and mRNA splicing. Bridges U1 and U2 snRNPs during pre-spliceosome assembly and enables stable U2 snRNP association with intron RNA. Through its helicase activity probably catalyzes an ATP-dependent conformational change of U2 snRNP. In Schizosaccharomyces pombe (strain 972 / ATCC 24843) (Fission yeast), this protein is Pre-mRNA-processing ATP-dependent RNA helicase prp11 (prp11).